A 391-amino-acid polypeptide reads, in one-letter code: Nucleosome assembly protein 1-like 1 (391 aa).

Over residues 1-10 (MADIDNKEQS) the composition is skewed to basic and acidic residues. The interval 1-32 (MADIDNKEQSELDQDLDDVEEVEEEETGEETK) is disordered. At Ala2 the chain carries N-acetylalanine. A Phosphoserine modification is found at Ser10. Residues 11 to 28 (ELDQDLDDVEEVEEEETG) show a composition bias toward acidic residues. Residues Thr62 and Thr64 each carry the phosphothreonine modification. Phosphoserine is present on Ser69. Lys116 carries the post-translational modification N6-acetyllysine. The NAP1L motif signature appears at 125–150 (YEPTEEECEWKPDEEDEISEELKEKA). Residues 132-143 (CEWKPDEEDEIS) show a composition bias toward acidic residues. Residues 132–163 (CEWKPDEEDEISEELKEKAKVEDEKKDEEKED) are disordered. Ser143 carries the post-translational modification Phosphoserine. A compositionally biased stretch (basic and acidic residues) spans 144–163 (EELKEKAKVEDEKKDEEKED). Positions 273 to 279 (IKKKQKH) match the Nuclear localization signal motif. Positions 345 to 391 (EAIEDDDDDYDEEGEEADEEGEEEGDEENDPDYDPKKDQNPAECKQQ) are disordered. Residues 346–376 (AIEDDDDDYDEEGEEADEEGEEEGDEENDPD) show a composition bias toward acidic residues. Glu359 and Glu360 each carry 5-glutamyl polyglycine. Residues 377–391 (YDPKKDQNPAECKQQ) show a composition bias toward basic and acidic residues. Residue Cys388 is modified to Cysteine methyl ester. The S-farnesyl cysteine moiety is linked to residue Cys388. The propeptide at 389 to 391 (KQQ) is removed in mature form.

The protein belongs to the nucleosome assembly protein (NAP) family. As to quaternary structure, homodimer. The dimer binds strongly and sequentially to single and double H2A-H2B heterodimers. Interacts with ERCC6; this interaction increases ERCC6 processivity. Interacts with RAD54. Interacts with SETD1A. Polyglycylated by TTLL10 on glutamate residues, resulting in polyglycine chains on the gamma-carboxyl group. Both polyglutamylation and polyglycylation modifications can coexist on the same protein on adjacent residues, and lowering polyglycylation levels increases polyglutamylation, and reciprocally. In terms of processing, polyglutamylated by TTLL4 on glutamate residues, resulting in polyglutamate chains on the gamma-carboxyl group. Both polyglutamylation and polyglycylation modifications can coexist on the same protein on adjacent residues, and lowering polyglycylation levels increases polyglutamylation, and reciprocally.

It is found in the nucleus. It localises to the melanosome. The protein resides in the cytoplasm. In terms of biological role, histone chaperone that plays a role in the nuclear import of H2A-H2B and nucleosome assembly. Also participates in several important DNA repair mechanisms: greatly enhances ERCC6-mediated chromatin remodeling which is essential for transcription-coupled nucleotide excision DNA repair. Also stimulates homologous recombination (HR) by RAD51 and RAD54 which is essential in mitotic DNA double strand break (DSB) repair. Plays a key role in the regulation of embryonic neurogenesis. Promotes the proliferation of neural progenitors and inhibits neuronal differentiation during cortical development. Regulates neurogenesis via the modulation of RASSF10; regulates RASSF10 expression by promoting SETD1A-mediated H3K4 methylation at the RASSF10 promoter. The sequence is that of Nucleosome assembly protein 1-like 1 (NAP1L1) from Bos taurus (Bovine).